Here is a 124-residue protein sequence, read N- to C-terminus: Fluoride-specific ion channel FluC (124 aa).

The next 4 helical transmembrane spans lie at 4–24, 35–55, 60–80, and 102–122; these read LLLV…ISIF, FGTL…YALG, ISPE…TTFS, and VVLN…LVFS. Na(+)-binding residues include G74 and T77.

It belongs to the fluoride channel Fluc/FEX (TC 1.A.43) family.

Its subcellular location is the cell inner membrane. The catalysed reaction is fluoride(in) = fluoride(out). Na(+) is not transported, but it plays an essential structural role and its presence is essential for fluoride channel function. Its function is as follows. Fluoride-specific ion channel. Important for reducing fluoride concentration in the cell, thus reducing its toxicity. The polypeptide is Fluoride-specific ion channel FluC (Shewanella baltica (strain OS223)).